Reading from the N-terminus, the 104-residue chain is Large ribosomal subunit protein bL21 (104 aa).

Belongs to the bacterial ribosomal protein bL21 family. Part of the 50S ribosomal subunit. Contacts protein L20.

In terms of biological role, this protein binds to 23S rRNA in the presence of protein L20. This chain is Large ribosomal subunit protein bL21, found in Streptococcus uberis (strain ATCC BAA-854 / 0140J).